The chain runs to 290 residues: Protein ORF27 (290 aa).

The chain is Protein ORF27 (ORF27) from Human herpesvirus 8 type P (isolate GK18) (HHV-8).